A 279-amino-acid polypeptide reads, in one-letter code: DegV domain-containing protein CA_C0701 (279 aa).

Residues 4 to 277 form the DegV domain; sequence IKIVTDSTCD…TKACGVFFIE (274 aa). Residues Thr62 and Ser94 each coordinate hexadecanoate.

Its function is as follows. May bind long-chain fatty acids, such as palmitate, and may play a role in lipid transport or fatty acid metabolism. In Clostridium acetobutylicum (strain ATCC 824 / DSM 792 / JCM 1419 / IAM 19013 / LMG 5710 / NBRC 13948 / NRRL B-527 / VKM B-1787 / 2291 / W), this protein is DegV domain-containing protein CA_C0701.